Here is a 315-residue protein sequence, read N- to C-terminus: Methionyl-tRNA formyltransferase (315 aa).

An N-terminal domain region spans residues 2–189 (SESLRIIFAG…LITTLKQLAD (188 aa)). Residue 113-116 (SLLP) participates in (6S)-5,6,7,8-tetrahydrofolate binding. The C-terminal domain stretch occupies residues 210–315 (KEEARIDWSL…EWFVPGNRLV (106 aa)).

It belongs to the Fmt family. Monomer.

It carries out the reaction L-methionyl-tRNA(fMet) + (6R)-10-formyltetrahydrofolate = N-formyl-L-methionyl-tRNA(fMet) + (6S)-5,6,7,8-tetrahydrofolate + H(+). Its activity is regulated as follows. Activity is optimum in the presence of Mg(2+) and K(+). Attaches a formyl group to the free amino group of methionyl-tRNA(fMet). The formyl group appears to play a dual role in the initiator identity of N-formylmethionyl-tRNA by promoting its recognition by IF2 and preventing the misappropriation of this tRNA by the elongation apparatus. In Escherichia coli (strain K12), this protein is Methionyl-tRNA formyltransferase.